The sequence spans 496 residues: MIEINNNHNNGNGKQFPSSQIMPDSKKKSIVKIGEYTLGEKIGRGAFGQVFKGLNGKTGEFVAIKQIDSNKIDESSLQSVKGEVEILHKLRHNNIVKVLGVVEVQAQLNFILEYVENGSLRDVIEKFGPLSEELCIIYLYQMLQGLAYLHSNKVIHRDIKASNILITKEGVIKLADFGVASQIDSESQLRFSVVGTPYWMAPESIEISGCSSASDIWSLGSTMIELLTGNPPYYTLQPMAAMFRIVSDQHPPFPTDISKEFLDYFQQSFKKDPTQRPTAQELLQHPIFFTLQKVPPTLSELQSTLKTLNGGRSRLRTSVNSIDWGSSSSTSGSSTPLSSSSSSSNIKSIVSDEDFNKLQTTIKQQAQTISNLSEEILILKKELKEKPKLEEQQFYKEYFMALAISVKVNQCYQDKTCEPKDMQQLYEMARSQEIPWYKLIEWIPSQLISNDNIPQLTPSSSRENISLSNSSSSIPNPNQNQNQNNKSKSKKFGFFS.

Residues 1–13 show a composition bias toward low complexity; sequence MIEINNNHNNGNG. The tract at residues 1–25 is disordered; it reads MIEINNNHNNGNGKQFPSSQIMPDS. A Protein kinase domain is found at 36–288; the sequence is YTLGEKIGRG…AQELLQHPIF (253 aa). ATP contacts are provided by residues 42 to 50 and K65; that span reads IGRGAFGQV. Residue D158 is the Proton acceptor of the active site. The tract at residues 323–345 is disordered; the sequence is DWGSSSSTSGSSTPLSSSSSSSN. A coiled-coil region spans residues 353 to 386; sequence EDFNKLQTTIKQQAQTISNLSEEILILKKELKEK. The segment at 454–496 is disordered; that stretch reads PQLTPSSSRENISLSNSSSSIPNPNQNQNQNNKSKSKKFGFFS. Over residues 458–486 the composition is skewed to low complexity; that stretch reads PSSSRENISLSNSSSSIPNPNQNQNQNNK. The span at 487 to 496 shows a compositional bias: basic residues; sequence SKSKKFGFFS.

It belongs to the protein kinase superfamily. STE Ser/Thr protein kinase family. Requires Mg(2+) as cofactor.

It carries out the reaction L-seryl-[protein] + ATP = O-phospho-L-seryl-[protein] + ADP + H(+). The enzyme catalyses L-threonyl-[protein] + ATP = O-phospho-L-threonyl-[protein] + ADP + H(+). This is Probable serine/threonine-protein kinase DDB_G0284251 from Dictyostelium discoideum (Social amoeba).